A 77-amino-acid polypeptide reads, in one-letter code: Putative defensin-like protein 185 (77 aa).

Residues 1 to 22 form the signal peptide; sequence MKNSSILLLLVVFFVISSSGEA. 4 cysteine pairs are disulfide-bonded: Cys25–Cys77, Cys31–Cys54, Cys40–Cys71, and Cys44–Cys73.

The protein belongs to the DEFL family.

The protein localises to the secreted. This is Putative defensin-like protein 185 (LCR39) from Arabidopsis thaliana (Mouse-ear cress).